The following is a 380-amino-acid chain: uncharacterized protein (380 aa).

Belongs to the metallo-dependent hydrolases superfamily.

This is an uncharacterized protein from Methanocaldococcus jannaschii (strain ATCC 43067 / DSM 2661 / JAL-1 / JCM 10045 / NBRC 100440) (Methanococcus jannaschii).